The sequence spans 396 residues: S-adenosylmethionine synthase (396 aa).

E12 contributes to the Mg(2+) binding site. An ATP-binding site is contributed by H18. Residue E46 coordinates K(+). Residues E59 and Q102 each coordinate L-methionine. ATP-binding positions include 170–172 (DGK), 238–241 (SGRF), D249, 255–256 (RK), A272, K276, and K280. Residue D249 participates in L-methionine binding. K280 serves as a coordination point for L-methionine.

It belongs to the AdoMet synthase family. In terms of assembly, homotetramer. The cofactor is Mn(2+). Mg(2+) is required as a cofactor. Co(2+) serves as cofactor. It depends on K(+) as a cofactor.

The protein localises to the cytoplasm. It catalyses the reaction L-methionine + ATP + H2O = S-adenosyl-L-methionine + phosphate + diphosphate. The protein operates within amino-acid biosynthesis; S-adenosyl-L-methionine biosynthesis; S-adenosyl-L-methionine from L-methionine: step 1/1. In terms of biological role, catalyzes the formation of S-adenosylmethionine from methionine and ATP. The reaction comprises two steps that are both catalyzed by the same enzyme: formation of S-adenosylmethionine (AdoMet) and triphosphate, and subsequent hydrolysis of the triphosphate. This is S-adenosylmethionine synthase (SAMS) from Triticum aestivum (Wheat).